The following is a 438-amino-acid chain: Phosphoribosylamine--glycine ligase (438 aa).

The 209-residue stretch at 108 to 316 (RTFMERNEIP…LLEVAEGIVD (209 aa)) folds into the ATP-grasp domain. 135-194 (VDDFGRPVVVKPIGLTGGKGVKVVGYQLRDNEEAKSYAEELIRRDGRVLIEERTNGVEFT) contacts ATP. The Mg(2+) site is built by Gln-274, Glu-286, and Asn-288. Mn(2+)-binding residues include Gln-274, Glu-286, and Asn-288.

The protein belongs to the GARS family. The cofactor is Mg(2+). Requires Mn(2+) as cofactor.

The catalysed reaction is 5-phospho-beta-D-ribosylamine + glycine + ATP = N(1)-(5-phospho-beta-D-ribosyl)glycinamide + ADP + phosphate + H(+). It functions in the pathway purine metabolism; IMP biosynthesis via de novo pathway; N(1)-(5-phospho-D-ribosyl)glycinamide from 5-phospho-alpha-D-ribose 1-diphosphate: step 2/2. The sequence is that of Phosphoribosylamine--glycine ligase from Thermococcus gammatolerans (strain DSM 15229 / JCM 11827 / EJ3).